The chain runs to 213 residues: Chloramphenicol acetyltransferase 2 (213 aa).

His-189 functions as the Proton acceptor in the catalytic mechanism.

It belongs to the chloramphenicol acetyltransferase family. In terms of assembly, homotrimer.

It catalyses the reaction chloramphenicol + acetyl-CoA = chloramphenicol 3-acetate + CoA. In terms of biological role, this enzyme is an effector of chloramphenicol resistance in bacteria. The chain is Chloramphenicol acetyltransferase 2 (cat-IIH) from Haemophilus influenzae.